The sequence spans 459 residues: Probable 1,4-beta-D-glucan cellobiohydrolase C (459 aa).

Positions Met-1 to Ala-18 are cleaved as a signal peptide. The CBM1 domain occupies Gln-19 to Thr-54. Disulfide bonds link Cys-26-Cys-43 and Cys-37-Cys-53. Residues Thr-54 to Thr-94 form a thr-rich linker region. The interval Val-76–Ala-97 is disordered. Residues Ala-95 to Phe-459 form a catalytic region. Asp-189 is a catalytic residue. An intrachain disulfide couples Cys-190 to Cys-249. The active-site Proton donor is Asp-235. An N-linked (GlcNAc...) asparagine glycan is attached at Asn-303. A disulfide bridge connects residues Cys-381 and Cys-428. Asp-414 serves as the catalytic Nucleophile.

Belongs to the glycosyl hydrolase 6 (cellulase B) family.

It localises to the secreted. The catalysed reaction is Hydrolysis of (1-&gt;4)-beta-D-glucosidic linkages in cellulose and cellotetraose, releasing cellobiose from the non-reducing ends of the chains.. Its function is as follows. The biological conversion of cellulose to glucose generally requires three types of hydrolytic enzymes: (1) Endoglucanases which cut internal beta-1,4-glucosidic bonds; (2) Exocellobiohydrolases that cut the disaccharide cellobiose from the non-reducing end of the cellulose polymer chain; (3) Beta-1,4-glucosidases which hydrolyze the cellobiose and other short cello-oligosaccharides to glucose. In Aspergillus niger (strain ATCC MYA-4892 / CBS 513.88 / FGSC A1513), this protein is Probable 1,4-beta-D-glucan cellobiohydrolase C (cbhC).